The primary structure comprises 748 residues: MTTEAKCPFNHSVVGAGTTNRDWWPKQLRVDLLNQHSARSNPLAASFNYAEAFKRLDLQTLKQELRALMTDSQDWWPADFGHYGPLFVRMAWHSAGTYRTGDGRGGGGRGQQRFAPLNSWPDNVSLDKARRLLWPIKQKYGQAISWADLMILTGNVALESMGFKTFGFAGGREDTWEPDQDLYWGRETKWLGGDDRYAHGSPGVDQAHGVLVKDDDSEVQHTRDLENPLAAVQMGLIYVNPEGPDGNPDPLLAAKDIRDTFGRMAMNDEETVALIAGGHTFGKTHGAADAAHVAAEPEASDLESQGLGWHNSFGSGKGGDTITSGLEVTWTTTPAQWSNDFFDHLFGFEWELSKSPAGAHQWVAKNAQAIIPDAHDASKKRLPTMLTTDLALRIDPAYEAISRRFHANPDQFADAFARAWFKLTHRDMGPRARYLGADVPAEELLWQDPIPALNHALIDAQDAAALKQTVLSSGLSVAQLVATAWASASSFRGSDKRGGANGARIRLAPQKDWASNEPAQLAQVLATLERIQADFNARQSGGKQISLADLIVLGGNAAVEQAAHAAGHAVTVPFAPGRMDASQAQTDVESFAVLEPVADGFRNYAKARYAVSAEALLIDKAQLLTLTAPEMTVLVGGLRVLGANTGQSHNGVFTTRPGVLSNDFFANLLDMRTEWKATSETKETYEGRDRATGEHKWTGTRVDLVFGSNSILRAVAEVYASADAQEKFVQDFVAAWTKVMQLDRFDLA.

The tryptophyl-tyrosyl-methioninium (Trp-Tyr) (with M-264) cross-link spans 92-238 (WHSAGTYRTG…LAAVQMGLIY (147 aa)). The active-site Proton acceptor is His93. Residues 238 to 264 (YVNPEGPDGNPDPLLAAKDIRDTFGRM) constitute a cross-link (tryptophyl-tyrosyl-methioninium (Tyr-Met) (with W-92)). His279 contributes to the heme b binding site.

Belongs to the peroxidase family. Peroxidase/catalase subfamily. As to quaternary structure, homodimer or homotetramer. The cofactor is heme b. Formation of the three residue Trp-Tyr-Met cross-link is important for the catalase, but not the peroxidase activity of the enzyme.

It carries out the reaction H2O2 + AH2 = A + 2 H2O. The catalysed reaction is 2 H2O2 = O2 + 2 H2O. In terms of biological role, bifunctional enzyme with both catalase and broad-spectrum peroxidase activity. The polypeptide is Catalase-peroxidase (Xanthomonas campestris pv. campestris (strain 8004)).